The primary structure comprises 221 residues: Succinate--CoA ligase [ADP-forming] subunit beta, mitochondrial (221 aa).

Positions 1–122 (DVVIKAQVLA…DSNSAYRQKI (122 aa)) constitute an ATP-grasp domain. Lys-5 is an ATP binding site. N6-acetyllysine occurs at positions 22 and 26. Ser-114 bears the Phosphoserine mark. The residue at position 139 (Thr-139) is a Phosphothreonine. 171–173 (GIM) lines the substrate pocket. Residue Lys-196 is modified to N6-acetyllysine.

The protein belongs to the succinate/malate CoA ligase beta subunit family. ATP-specific subunit beta subfamily. As to quaternary structure, heterodimer of an alpha and a beta subunit. The beta subunit determines specificity for ATP. Interacts with ALAS2.

It is found in the mitochondrion. It catalyses the reaction succinate + ATP + CoA = succinyl-CoA + ADP + phosphate. It participates in carbohydrate metabolism; tricarboxylic acid cycle; succinate from succinyl-CoA (ligase route): step 1/1. Functionally, ATP-specific succinyl-CoA synthetase functions in the citric acid cycle (TCA), coupling the hydrolysis of succinyl-CoA to the synthesis of ATP and thus represents the only step of substrate-level phosphorylation in the TCA. The beta subunit provides nucleotide specificity of the enzyme and binds the substrate succinate, while the binding sites for coenzyme A and phosphate are found in the alpha subunit. This is Succinate--CoA ligase [ADP-forming] subunit beta, mitochondrial from Mesocricetus auratus (Golden hamster).